Here is a 134-residue protein sequence, read N- to C-terminus: Insulin-like peptide 4 (134 aa).

Residues 1 to 26 (MSLIRLGLALLLLLATVSQLLQPVQG) form the signal peptide. 3 disulfides stabilise this stretch: cysteine 31–cysteine 120, cysteine 43–cysteine 133, and cysteine 119–cysteine 124. A propeptide spans 54–108 (SSASKDARVRDLIRKLQQPDEDIEQETETGRLKQKHTDADTEKGVPPAVGSGRKL) (connecting peptide). The tract at residues 72-107 (PDEDIEQETETGRLKQKHTDADTEKGVPPAVGSGRK) is disordered. Positions 81-96 (ETGRLKQKHTDADTEK) are enriched in basic and acidic residues.

It belongs to the insulin family. As to quaternary structure, heterodimer of a B chain and an A chain linked by two disulfide bonds. Expressed at a high level in the embryonic mesoderm, with expression continuing after gastrulation and reducing from stage 12 onwards. Highly expressed in the embryonic anterior midgut rudiment and larval midgut.

It localises to the secreted. Its function is as follows. Possible ligand of InR/insulin-like receptor. In Drosophila melanogaster (Fruit fly), this protein is Insulin-like peptide 4.